The chain runs to 258 residues: Synapse differentiation-inducing gene protein 1 (258 aa).

Residues 1–181 are Cytoplasmic-facing; the sequence is MDGIIEQKSV…NFLMMPPRDH (181 aa). Residue S137 is modified to Phosphoserine. Residues 182–202 traverse the membrane as a helical segment; that stretch reads LGLSVFSMLCCFWPLGIAAFY. Residues 203–228 are Extracellular-facing; sequence LSHETNKAVAKGDFHQASTSSRRALF. The segment at residues 229 to 249 is an intramembrane region (helical); it reads LAVLSITIGTGIYVGVAVALI. At 250-258 the chain is on the extracellular side; sequence AYLSKNNHL.

This sequence belongs to the CD225/Dispanin family. In terms of assembly, homodimer. Interacts with GRIA1 and GRIA2. Brain-specific. Expressed in Purkinje neurons in cerebellum. Also detected in the hippocampus. Found at excitatory synapses and postsynaptic cells.

It is found in the cell membrane. Its subcellular location is the early endosome membrane. The protein resides in the postsynaptic density membrane. The protein localises to the synapse. It localises to the cell projection. It is found in the dendrite. Its subcellular location is the dendritic spine. May regulate AMPA receptor content at nascent synapses, and have a role in postsynaptic development and maturation. This chain is Synapse differentiation-inducing gene protein 1 (Syndig1), found in Mus musculus (Mouse).